We begin with the raw amino-acid sequence, 649 residues long: Quinol oxidase subunit 1 (649 aa).

Residues 1–13 (MKFKWDEFFVTGD) lie on the Extracellular side of the membrane. Residues 14-34 (PLILGAQVSIALSTIAIIFVL) form a helical membrane-spanning segment. Residues 35–55 (TYFKKWKWLWSEWITTVDHKK) are Cytoplasmic-facing. The helical transmembrane segment at 56 to 76 (LGIMYIISAVIMLFRGGVDGL) threads the bilayer. Residues 77–104 (MMRAQLALPNNSFLDSNHYNEIFTTHGT) are Extracellular-facing. A Fe(II)-heme a-binding site is contributed by His102. A helical transmembrane segment spans residues 105–125 (IMIIFMAMPFLIGLINVVVPL). The Cytoplasmic segment spans residues 126–139 (QIGARDVAFPYLNN). The chain crosses the membrane as a helical span at residues 140–160 (LSFWTFFVGAMLFNISFVIGG). Over 161–187 (SPNAGWTSYMPLASNDMSPGPGENYYL) the chain is Extracellular. The helical transmembrane segment at 188–208 (LGLQIAGIGTLMTGINFMVTI) threads the bilayer. Residues 209-228 (LKMRTKGMTLMRMPMFTWTT) lie on the Cytoplasmic side of the membrane. The helical transmembrane segment at 229-249 (LITMVIIVFAFPVLTVALALL) threads the bilayer. Residues 250 to 273 (SFDRLFGAHFFTLEAGGMPMLWAN) are Extracellular-facing. A helical membrane pass occupies residues 274-294 (LFWIWGHPEVYIVILPAFGIF). Residues His280 and Tyr284 each contribute to the Cu cation site. Positions 280 to 284 (HPEVY) form a cross-link, 1'-histidyl-3'-tyrosine (His-Tyr). The Cytoplasmic portion of the chain corresponds to 295-305 (SEIISSFARKQ). A helical transmembrane segment spans residues 306–326 (LFGYTAMVGSIIAISVLSFLV). At 327-342 (WTHHFFTMGNSASVNS) the chain is on the extracellular side. Cu cation is bound by residues His329 and His330. A helical transmembrane segment spans residues 343-363 (FFSITTMAISIPTGVKIFNWL). Residues 364-376 (FTMYKGRISFTTP) are Cytoplasmic-facing. Residues 377 to 397 (MLWALAFIPNFVIGGVTGVML) form a helical membrane-spanning segment. At 398–415 (AMAAADYQYHNTYFLVSH) the chain is on the extracellular side. His415 is a heme a3 binding site. The helical transmembrane segment at 416-436 (FHYVLIAGTVFACFAGFIFWY) threads the bilayer. His417 serves as a coordination point for Fe(II)-heme a. At 437–451 (PKMFGHKLNERIGKW) the chain is on the cytoplasmic side. The chain crosses the membrane as a helical span at residues 452–472 (FFWIFMIGFNICFFPQYFLGL). Residues 473–492 (QGMPRRIYTYGPNDGWTTLN) lie on the Extracellular side of the membrane. Residues 493-513 (FISTVGAFMMGVGFLILCYNI) traverse the membrane as a helical segment. Residues 514–585 (YYSFRYSTRE…KFKKIHMPSN (72 aa)) lie on the Cytoplasmic side of the membrane. The helical transmembrane segment at 586–603 (SGRPFFMSVAFGIAGFGL) threads the bilayer. Topologically, residues 604 to 606 (VFE) are extracellular. Residues 607–624 (WYWMGVVGLIGVLLCMVL) traverse the membrane as a helical segment. Residues 625–649 (RSFEYDNGYYISVDEIKETERKISE) are Cytoplasmic-facing.

The protein belongs to the heme-copper respiratory oxidase family. Cu cation is required as a cofactor. The cofactor is ferriheme a. Requires Heme A3. as cofactor.

The protein resides in the cell membrane. The catalysed reaction is 2 a quinol + O2 = 2 a quinone + 2 H2O. It functions in the pathway energy metabolism; oxidative phosphorylation. Catalyzes quinol oxidation with the concomitant reduction of oxygen to water. Major component for energy conversion during vegetative growth. The protein is Quinol oxidase subunit 1 (qoxB) of Bacillus spizizenii (strain ATCC 23059 / NRRL B-14472 / W23) (Bacillus subtilis subsp. spizizenii).